Reading from the N-terminus, the 160-residue chain is Transcription antitermination protein NusB (160 aa).

This sequence belongs to the NusB family.

Functionally, involved in transcription antitermination. Required for transcription of ribosomal RNA (rRNA) genes. Binds specifically to the boxA antiterminator sequence of the ribosomal RNA (rrn) operons. This chain is Transcription antitermination protein NusB, found in Rhizobium leguminosarum bv. trifolii (strain WSM2304).